Here is a 389-residue protein sequence, read N- to C-terminus: Type 2 DNA topoisomerase 6 subunit A (389 aa).

The region spanning 13–161 is the Topo IIA-type catalytic domain; the sequence is KARLRAAEVM…MLILSKEKGK (149 aa). Residue Tyr107 is the O-(5'-phospho-DNA)-tyrosine intermediate of the active site. 2 residues coordinate Mg(2+): Glu208 and Asp260.

This sequence belongs to the TOP6A family. Homodimer. Heterotetramer of two Top6A and two Top6B chains. Requires Mg(2+) as cofactor.

The catalysed reaction is ATP-dependent breakage, passage and rejoining of double-stranded DNA.. Relaxes both positive and negative superturns and exhibits a strong decatenase activity. The chain is Type 2 DNA topoisomerase 6 subunit A from Aeropyrum pernix (strain ATCC 700893 / DSM 11879 / JCM 9820 / NBRC 100138 / K1).